The chain runs to 788 residues: IQ motif and ubiquitin-like domain-containing protein (788 aa).

The disordered stretch occupies residues 1–89 (MSDPEEERVA…SLGSASGSQD (89 aa)). A compositionally biased stretch (basic and acidic residues) spans 7–20 (ERVADSTAHYEEAG). Residues 31-54 (EAEGSDVMPEQDDEVQELTTESEE) are compositionally biased toward acidic residues. Over residues 68–78 (KSDDSKPREEV) the composition is skewed to basic and acidic residues. Polar residues predominate over residues 80 to 89 (SLGSASGSQD). Residues 127 to 203 (ATVKIVLIPA…VQVEVFSTLP (77 aa)) enclose the Ubiquitin-like domain. The IQ domain maps to 334–363 (RLHAVIVIQTSYRRWHAKRYVESLRKQKKL).

In terms of assembly, component of the axonemal radial spoke 1 (RS1) complex, at least composed of spoke head proteins RSPH1, RSPH3B, RSPH9 and the cilia-specific component RSPH4A or sperm-specific component RSPH6A, spoke stalk proteins RSPH14, DNAJB13, DYDC1, ROPN1L and NME5, and the anchor protein IQUB. Does not appear to be part of radial spoke complexes 2 or 3 (RS2 or RS3). Interacts with CALM1. Interacts with DNAJB13. Interacts with DYNLL2. Interacts with NME5. Interacts with RSPH3. Interacts with RSPH9. Interacts with ZMYND10. Interacts with calmodulin; the interaction occurs in conditions of low but not high calcium. As to expression, expressed in the flagellum of sperm cells and cilia of tracheal epithelial cells (at protein level). High expression in testis, also present in brain and lung.

The protein localises to the cytoplasm. It is found in the cytoskeleton. Its subcellular location is the flagellum axoneme. The protein resides in the cell projection. It localises to the cilium. Anchors the radial spoke 1 (RS1) complex to the A microtubule of outer doublet microtubules in axonemes. The triple radial spokes (RS1, RS2 and RS3) are required to modulate beating of the sperm flagellum. May play a role in inhibiting signaling via MAPK1/ERK2 and MAPK3/ERK1. Additionally, may play a role in the functioning of cilia. Not required for the functioning of tracheal or ependymal cilia. This Mus musculus (Mouse) protein is IQ motif and ubiquitin-like domain-containing protein (Iqub).